We begin with the raw amino-acid sequence, 315 residues long: DNA-directed RNA polymerase subunit alpha (315 aa).

The segment at 1 to 228 (MIEIEKPKIE…EHLNLFIDLS (228 aa)) is alpha N-terminal domain (alpha-NTD). Residues 245–315 (KEKVLEMTIE…LGLSLAPSED (71 aa)) form an alpha C-terminal domain (alpha-CTD) region.

The protein belongs to the RNA polymerase alpha chain family. Homodimer. The RNAP catalytic core consists of 2 alpha, 1 beta, 1 beta' and 1 omega subunit. When a sigma factor is associated with the core the holoenzyme is formed, which can initiate transcription.

It carries out the reaction RNA(n) + a ribonucleoside 5'-triphosphate = RNA(n+1) + diphosphate. Functionally, DNA-dependent RNA polymerase catalyzes the transcription of DNA into RNA using the four ribonucleoside triphosphates as substrates. The sequence is that of DNA-directed RNA polymerase subunit alpha from Acetivibrio thermocellus (strain ATCC 27405 / DSM 1237 / JCM 9322 / NBRC 103400 / NCIMB 10682 / NRRL B-4536 / VPI 7372) (Clostridium thermocellum).